Here is a 379-residue protein sequence, read N- to C-terminus: uncharacterized protein (379 aa).

This is an uncharacterized protein from Acanthamoeba polyphaga (Amoeba).